A 438-amino-acid polypeptide reads, in one-letter code: Enolase (438 aa).

His-159 and Glu-168 together coordinate substrate. The active-site Proton donor is the Glu-211. The Mg(2+) site is built by Asp-246, Glu-297, and Asp-322. Positions 297 and 322 each coordinate substrate. The Proton acceptor role is filled by Lys-347. Substrate is bound by residues 374–377 (SHRS) and Lys-398.

The protein belongs to the enolase family. Homodimer. Requires Mg(2+) as cofactor.

It is found in the cytoplasm. It catalyses the reaction (2R)-2-phosphoglycerate = phosphoenolpyruvate + H2O. Its pathway is carbohydrate degradation; glycolysis; pyruvate from D-glyceraldehyde 3-phosphate: step 4/5. The protein is Enolase (enoA) of Aspergillus fumigatus (strain ATCC MYA-4609 / CBS 101355 / FGSC A1100 / Af293) (Neosartorya fumigata).